Here is a 308-residue protein sequence, read N- to C-terminus: Beta-1,3-galactosyltransferase 5 (308 aa).

At 1–7 (MAHMKTR) the chain is on the cytoplasmic side. The helical; Signal-anchor for type II membrane protein transmembrane segment at 8–25 (LVYASILMMGALCLYFSM) threads the bilayer. The Lumenal portion of the chain corresponds to 26–308 (DSFRELPFVF…NSKEQDCPAV (283 aa)). 3 N-linked (GlcNAc...) asparagine glycosylation sites follow: Asn128, Asn172, and Asn229.

This sequence belongs to the glycosyltransferase 31 family. Expressed in brain and kidney.

The protein resides in the golgi apparatus membrane. The catalysed reaction is a globoside Gb4Cer (d18:1(4E)) + UDP-alpha-D-galactose = a globoside GalGb4Cer (d18:1(4E)) + UDP + H(+). It functions in the pathway protein modification; protein glycosylation. Its function is as follows. Catalyzes the transfer of Gal to GlcNAc-based acceptors with a preference for the core3 O-linked glycan GlcNAc(beta1,3)GalNAc structure. Can use glycolipid LC3Cer as an efficient acceptor. Also catalyzes the transfer of Gal to the terminal GalNAc unit of the globoside GB4, thereby synthesizing the glycolipid GB5, also known as the stage-specific embryonic antigen-3 (SSEA-3). The chain is Beta-1,3-galactosyltransferase 5 from Mus musculus (Mouse).